The sequence spans 126 residues: MPTINQLIRKERQKVVKKSKSPALVSCPQRRGVCTRVYTTTPKKPNSALRKVAKVRLTSGFEVISYIMGEGHNLQEHSIVLVRGGRIKDLPGVKYHIVRGALDTAGVANRTVSRSKYGTKRPKVKK.

Residue Asp-89 is modified to 3-methylthioaspartic acid.

The protein belongs to the universal ribosomal protein uS12 family. Part of the 30S ribosomal subunit. Contacts proteins S8 and S17. May interact with IF1 in the 30S initiation complex.

With S4 and S5 plays an important role in translational accuracy. Functionally, interacts with and stabilizes bases of the 16S rRNA that are involved in tRNA selection in the A site and with the mRNA backbone. Located at the interface of the 30S and 50S subunits, it traverses the body of the 30S subunit contacting proteins on the other side and probably holding the rRNA structure together. The combined cluster of proteins S8, S12 and S17 appears to hold together the shoulder and platform of the 30S subunit. This chain is Small ribosomal subunit protein uS12, found in Sulfurimonas denitrificans (strain ATCC 33889 / DSM 1251) (Thiomicrospira denitrificans (strain ATCC 33889 / DSM 1251)).